Consider the following 512-residue polypeptide: Choline-sulfatase (512 aa).

Positions 14, 15, and 54 each coordinate Ca(2+). The active-site Nucleophile is the cysteine 54. At cysteine 54 the chain carries 3-oxoalanine (Cys). Histidine 104 is a catalytic residue. Ca(2+) contacts are provided by aspartate 296 and histidine 297.

It belongs to the sulfatase family. Requires Ca(2+) as cofactor. In terms of processing, the conversion to 3-oxoalanine (also known as C-formylglycine, FGly), of a serine or cysteine residue in prokaryotes and of a cysteine residue in eukaryotes, is critical for catalytic activity.

The catalysed reaction is choline sulfate + H2O = choline + sulfate + H(+). Its pathway is amine and polyamine biosynthesis; choline biosynthesis; choline from choline sulfate: step 1/1. Its function is as follows. Converts choline-O-sulfate into choline. The polypeptide is Choline-sulfatase (betC) (Rhizobium meliloti (strain 1021) (Ensifer meliloti)).